Reading from the N-terminus, the 133-residue chain is Ribosome-binding factor A (133 aa).

It belongs to the RbfA family. In terms of assembly, monomer. Binds 30S ribosomal subunits, but not 50S ribosomal subunits or 70S ribosomes.

The protein localises to the cytoplasm. In terms of biological role, one of several proteins that assist in the late maturation steps of the functional core of the 30S ribosomal subunit. Associates with free 30S ribosomal subunits (but not with 30S subunits that are part of 70S ribosomes or polysomes). Required for efficient processing of 16S rRNA. May interact with the 5'-terminal helix region of 16S rRNA. The polypeptide is Ribosome-binding factor A (Klebsiella pneumoniae (strain 342)).